We begin with the raw amino-acid sequence, 354 residues long: Divinyl chlorophyll a/b light-harvesting protein PcbF (354 aa).

The next 6 helical transmembrane spans lie at 27-47 (FIAS…SNTL), 88-108 (VVTL…GGLL), 140-160 (FILG…VEWA), 201-221 (VMGG…FHAI), 248-268 (AILS…AFWC), and 315-335 (TANF…WHAL).

This sequence belongs to the PsbB/PsbC family. IsiA/Pcb subfamily. As to quaternary structure, the antenna complex consists of divinyl chlorophylls (a and b) and divinyl chlorophyll a/b binding proteins and binds more divinyl chlorophyll b than does the antenna complex from high-light-adapted Prochlorococcus. The cofactor is divinyl chlorophyll a. Divinyl chlorophyll b is required as a cofactor.

The protein resides in the cellular thylakoid membrane. The antenna complex functions as a light receptor, it captures and delivers excitation energy to photosystems II and I. The Prochlorales pcb genes are not related to higher plant LHCs. The protein is Divinyl chlorophyll a/b light-harvesting protein PcbF (pcbF) of Prochlorococcus marinus (strain SARG / CCMP1375 / SS120).